We begin with the raw amino-acid sequence, 58 residues long: Photosystem II reaction center protein K (58 aa).

The propeptide occupies 1–21; it reads MLAIFNIYLDNAFHLNGIILA. The helical transmembrane segment at 29–49 threads the bilayer; that stretch reads IFDPIVDVMPIIPVFFFLLAF.

It belongs to the PsbK family. PSII is composed of 1 copy each of membrane proteins PsbA, PsbB, PsbC, PsbD, PsbE, PsbF, PsbH, PsbI, PsbJ, PsbK, PsbL, PsbM, PsbT, PsbX, PsbY, PsbZ, Psb30/Ycf12, at least 3 peripheral proteins of the oxygen-evolving complex and a large number of cofactors. It forms dimeric complexes.

It is found in the plastid. It localises to the chloroplast thylakoid membrane. In terms of biological role, one of the components of the core complex of photosystem II (PSII). PSII is a light-driven water:plastoquinone oxidoreductase that uses light energy to abstract electrons from H(2)O, generating O(2) and a proton gradient subsequently used for ATP formation. It consists of a core antenna complex that captures photons, and an electron transfer chain that converts photonic excitation into a charge separation. This Physcomitrium patens (Spreading-leaved earth moss) protein is Photosystem II reaction center protein K.